Here is a 151-residue protein sequence, read N- to C-terminus: MKCPKCGSLNDKVLETRQSKEGVVIKRRRECLNCGYRFTTYERIEEEHIEVIKKNNTVEPFNKEKIIRGILLASKNRPITQEQIKQIADDIEKYLLDEGKLKVSSAEIGDLVKNRLKELDPVSYLRFVSVFDGFEDIKDFEEFIKSFEKKI.

A zinc finger lies at Cys-3–Cys-34. Residues Ile-49 to Asp-139 form the ATP-cone domain.

Belongs to the NrdR family. Requires Zn(2+) as cofactor.

Its function is as follows. Negatively regulates transcription of bacterial ribonucleotide reductase nrd genes and operons by binding to NrdR-boxes. This Sulfurihydrogenibium sp. (strain YO3AOP1) protein is Transcriptional repressor NrdR.